The chain runs to 357 residues: Multiple sugar-binding periplasmic protein SbpA (357 aa).

The N-terminal stretch at 1–20 is a signal peptide; it reads MSSSFTTTLAGMAVGMLVLA.

It belongs to the bacterial solute-binding protein 2 family.

The protein resides in the periplasm. Mediates chemotaxis towards D-galactose, L-arabinose and D-fucose but not towards D-fructose. Probably part of a binding-protein high affinity uptake system. This Azospirillum brasilense protein is Multiple sugar-binding periplasmic protein SbpA (sbpA).